The primary structure comprises 276 residues: NH(3)-dependent NAD(+) synthetase (276 aa).

Position 43–50 (43–50) interacts with ATP; it reads GISGGVDS. Position 49 (Asp-49) interacts with Mg(2+). Position 146 (Arg-146) interacts with deamido-NAD(+). An ATP-binding site is contributed by Thr-166. Glu-171 lines the Mg(2+) pocket. Residues Lys-179 and Asp-186 each contribute to the deamido-NAD(+) site. 2 residues coordinate ATP: Lys-195 and Thr-217. 266–267 serves as a coordination point for deamido-NAD(+); sequence HK.

Belongs to the NAD synthetase family. In terms of assembly, homodimer.

It catalyses the reaction deamido-NAD(+) + NH4(+) + ATP = AMP + diphosphate + NAD(+) + H(+). Its pathway is cofactor biosynthesis; NAD(+) biosynthesis; NAD(+) from deamido-NAD(+) (ammonia route): step 1/1. Its function is as follows. Catalyzes the ATP-dependent amidation of deamido-NAD to form NAD. Uses ammonia as a nitrogen source. This Psychromonas ingrahamii (strain DSM 17664 / CCUG 51855 / 37) protein is NH(3)-dependent NAD(+) synthetase.